The following is a 261-amino-acid chain: Enolase-phosphatase E1 (261 aa).

The Mg(2+) site is built by Asp-16 and Glu-18. Substrate is bound by residues 150-151 and Lys-184; that span reads SS. Asp-209 lines the Mg(2+) pocket.

Belongs to the HAD-like hydrolase superfamily. MasA/MtnC family. As to quaternary structure, monomer. Requires Mg(2+) as cofactor.

It localises to the cytoplasm. The protein localises to the nucleus. It catalyses the reaction 5-methylsulfanyl-2,3-dioxopentyl phosphate + H2O = 1,2-dihydroxy-5-(methylsulfanyl)pent-1-en-3-one + phosphate. It functions in the pathway amino-acid biosynthesis; L-methionine biosynthesis via salvage pathway; L-methionine from S-methyl-5-thio-alpha-D-ribose 1-phosphate: step 3/6. It participates in amino-acid biosynthesis; L-methionine biosynthesis via salvage pathway; L-methionine from S-methyl-5-thio-alpha-D-ribose 1-phosphate: step 4/6. Bifunctional enzyme that catalyzes the enolization of 2,3-diketo-5-methylthiopentyl-1-phosphate (DK-MTP-1-P) into the intermediate 2-hydroxy-3-keto-5-methylthiopentenyl-1-phosphate (HK-MTPenyl-1-P), which is then dephosphorylated to form the acireductone 1,2-dihydroxy-3-keto-5-methylthiopentene (DHK-MTPene). The protein is Enolase-phosphatase E1 (Enoph1) of Rattus norvegicus (Rat).